Reading from the N-terminus, the 407-residue chain is Inhibin beta B chain (407 aa).

The signal sequence occupies residues 1-28 (MDGLPGRALGAACLLLLAAGWLGPEAWG). The disordered stretch occupies residues 26–62 (AWGSPTPPPTPAAPPPPPPPGSPGGSQDTCTSCGGFR). The propeptide occupies 29-292 (SPTPPPTPAA…GDSRHRIRKR (264 aa)). A compositionally biased stretch (pro residues) spans 30-47 (PTPPPTPAAPPPPPPPGS). A glycan (N-linked (GlcNAc...) asparagine) is linked at N93. 4 cysteine pairs are disulfide-bonded: C296–C304, C303–C372, C332–C404, and C336–C406.

Belongs to the TGF-beta family. As to quaternary structure, dimeric, linked by one or more disulfide bonds. Inhibin B is a dimer of alpha and beta-B. Activin B is a homodimer of beta-B. Activin AB is a dimer of beta-A and beta-B. Interacts with FST and FSTL3. Activin B interacts with BMPR2.

Its subcellular location is the secreted. Its function is as follows. Inhibins and activins inhibit and activate, respectively, the secretion of follitropin by the pituitary gland. Inhibins/activins are involved in regulating a number of diverse functions such as hypothalamic and pituitary hormone secretion, gonadal hormone secretion, germ cell development and maturation, erythroid differentiation, insulin secretion, nerve cell survival, embryonic axial development or bone growth, depending on their subunit composition. Inhibins appear to oppose the functions of activins. Activin B is a dimer of alpha and beta-B that plays a role in several essential biological processes including embryonic development, stem cell maintenance and differentiation, haematopoiesis, cell proliferation and wound healing. Signals through type I receptor ACVR1C, abundantly expressed in pancreatic beta cells, and type II receptors like ACVR2A or BMPR2. Upon ligand binding, these receptors phosphorylate intracellular signaling mediators SMAD2 and SMAD3, which form a complex with SMAD4, translocate to the nucleus, and regulate gene expression. Plays a crucial role in the induction of hepcidin by inflammation through activation of ACVR1C and subsequent phosphorylation of SMAD1/5/8. Regulates adipocyte lipid metabolism by decreasing non-esterified fatty acids and glycerol release and increases intracellular triglyceride content. Stimulates wound healing by promoting cell migration and hair follicle regeneration through the JNK and ERK signaling pathways downstream of RHOA. Functionally, inhibin B is a dimer of alpha and beta-B that plays a crucial role in the regulation of the reproductive system by inhibiting the secretion of follicle-stimulating hormone (FSH) from the anterior pituitary gland. Thereby, maintains reproductive homeostasis in both males and females. Acts as a more potent suppressor of FSH release than inhibin A. Functions as competitive receptor antagonist binding activin type II receptors with high affinity in the presence of the TGF-beta type III coreceptor/TGFBR3L. This Homo sapiens (Human) protein is Inhibin beta B chain (INHBB).